The sequence spans 375 residues: Queuine tRNA-ribosyltransferase (375 aa).

Asp89 acts as the Proton acceptor in catalysis. Substrate-binding positions include 89-93, Asp143, Gln187, and Gly214; that span reads DSGGF. The segment at 245-251 is RNA binding; sequence GVGKPED. Asp264 acts as the Nucleophile in catalysis. An RNA binding; important for wobble base 34 recognition region spans residues 269 to 273; the sequence is TRNAR. Zn(2+) contacts are provided by Cys302, Cys304, Cys307, and His333.

It belongs to the queuine tRNA-ribosyltransferase family. Homodimer. Within each dimer, one monomer is responsible for RNA recognition and catalysis, while the other monomer binds to the replacement base PreQ1. Zn(2+) is required as a cofactor.

The enzyme catalyses 7-aminomethyl-7-carbaguanine + guanosine(34) in tRNA = 7-aminomethyl-7-carbaguanosine(34) in tRNA + guanine. The protein operates within tRNA modification; tRNA-queuosine biosynthesis. Functionally, catalyzes the base-exchange of a guanine (G) residue with the queuine precursor 7-aminomethyl-7-deazaguanine (PreQ1) at position 34 (anticodon wobble position) in tRNAs with GU(N) anticodons (tRNA-Asp, -Asn, -His and -Tyr). Catalysis occurs through a double-displacement mechanism. The nucleophile active site attacks the C1' of nucleotide 34 to detach the guanine base from the RNA, forming a covalent enzyme-RNA intermediate. The proton acceptor active site deprotonates the incoming PreQ1, allowing a nucleophilic attack on the C1' of the ribose to form the product. After dissociation, two additional enzymatic reactions on the tRNA convert PreQ1 to queuine (Q), resulting in the hypermodified nucleoside queuosine (7-(((4,5-cis-dihydroxy-2-cyclopenten-1-yl)amino)methyl)-7-deazaguanosine). The polypeptide is Queuine tRNA-ribosyltransferase (Aliivibrio salmonicida (strain LFI1238) (Vibrio salmonicida (strain LFI1238))).